The chain runs to 382 residues: RNA exonuclease 3 (382 aa).

The 147-residue stretch at 223–369 (VLALDCEMAY…EDAIAAMDVV (147 aa)) folds into the Exonuclease domain.

The protein belongs to the REXO1/REXO3 family.

It is found in the cytoplasm. The protein resides in the nucleus. Its function is as follows. 3' to 5' exoribonuclease required for proper 3' end maturation of MRP RNA and of the U5L snRNA. In Eremothecium gossypii (strain ATCC 10895 / CBS 109.51 / FGSC 9923 / NRRL Y-1056) (Yeast), this protein is RNA exonuclease 3 (REX3).